The sequence spans 93 residues: Protein translocase subunit SecE (93 aa).

A disordered region spans residues Met1 to Pro33. Over residues Lys20 to Pro33 the composition is skewed to basic residues. Residues Thr64–Phe84 form a helical membrane-spanning segment.

The protein belongs to the SecE/SEC61-gamma family. As to quaternary structure, component of the Sec protein translocase complex. Heterotrimer consisting of SecY, SecE and SecG subunits. The heterotrimers can form oligomers, although 1 heterotrimer is thought to be able to translocate proteins. Interacts with the ribosome. Interacts with SecDF, and other proteins may be involved. Interacts with SecA.

It localises to the cell membrane. Its function is as follows. Essential subunit of the Sec protein translocation channel SecYEG. Clamps together the 2 halves of SecY. May contact the channel plug during translocation. The chain is Protein translocase subunit SecE from Streptomyces virginiae (Streptomyces cinnamonensis).